The primary structure comprises 546 residues: Phosphoglucomutase (546 aa).

The active-site Phosphoserine intermediate is Ser135. Residues Ser135, Asp288, Asp290, and Asp292 each coordinate Mg(2+).

Belongs to the phosphohexose mutase family. The cofactor is Mg(2+).

It catalyses the reaction alpha-D-glucose 1-phosphate = alpha-D-glucose 6-phosphate. The protein operates within glycolipid metabolism; diglucosyl-diacylglycerol biosynthesis. Its function is as follows. Catalyzes the interconversion between glucose-6-phosphate and alpha-glucose-1-phosphate. This is the first step in the biosynthesis of diglucosyl-diacylglycerol (Glc2-DAG), i.e. a glycolipid found in the membrane, which is also used as a membrane anchor for lipoteichoic acid (LTA). The sequence is that of Phosphoglucomutase (pgcA) from Staphylococcus epidermidis (strain ATCC 12228 / FDA PCI 1200).